The chain runs to 982 residues: NACHT, LRR and PYD domains-containing protein 4C (982 aa).

A Pyrin domain is found at 1–93; the sequence is MASFFSDFGL…MERAGREIAG (93 aa). Residues 148–471 form the NACHT domain; it reads HMVFLQGAAG…FYLLKSHMDH (324 aa). 154-161 serves as a coordination point for ATP; that stretch reads GAAGIGKS. LRR repeat units lie at residues 594-617, 689-716, 746-773, 802-825, 827-844, 859-882, and 916-940; these read CSTLKKLSLSTQNVLSEGQEHSYT, NQCLQHLDLNLTFLSHGDVKLLCDVLSQ, SKMLKHLNLSSNNLDKGISSLSKALCHP, NKTLNHLDISSNDLKDEGLKVLCG, LSLPDSVLKSLSVRYCLI, NQNLRNLQVSNNKIEDAGVKLLCD, and CKTLWGINLQENALDHSGLIVLFEA.

It belongs to the NLRP family.

In terms of biological role, may be involved in inflammation and recognition of cytosolic pathogen-associated molecular patterns (PAMPs) not intercepted by membrane-bound receptors. This Mus musculus (Mouse) protein is NACHT, LRR and PYD domains-containing protein 4C (Nlrp4c).